Reading from the N-terminus, the 287-residue chain is Serine/arginine-rich SC35-like splicing factor SCL33 (287 aa).

The segment at Met-1–Leu-34 is disordered. Residues Ser-9 and Ser-20 each carry the phosphoserine modification. The RRM domain occupies Thr-36 to Glu-114. Residues Arg-116–Phe-132 are compositionally biased toward basic and acidic residues. The tract at residues Arg-116–Gln-287 is disordered. Phosphoserine occurs at positions 165, 175, 177, 188, and 190. Residues Ser-177–Arg-187 show a composition bias toward basic and acidic residues. Positions Ser-220–Arg-237 are enriched in basic residues. Phosphoserine occurs at positions 238, 248, 271, 284, and 286. Basic residues predominate over residues Ser-244–Arg-260. Residues Gln-278–Gln-287 show a composition bias toward basic and acidic residues.

It belongs to the splicing factor SR family. SCL subfamily. As to quaternary structure, component of the spliceosome. Homodimer. Interacts with AFC2, CYP59, RS2Z33, RNU1 and SR45. The interaction with AFC2 depends on phosphorylation status. In terms of processing, phosphorylated by AFC2. As to expression, ubiquitous. Mostly expressed in roots, fruits and flowers, and, to a lower extent, in leaves.

It localises to the nucleus speckle. The protein localises to the nucleus. The protein resides in the nucleoplasm. Its subcellular location is the cytoplasm. Functionally, involved in intron recognition and spliceosome assembly. Binds to multiple 5'-GAAG-3' repeats found in its third intron, suggesting autoregulation of alternative splicing. May be necessary for accurate splicing of the 3' region of introns. This is Serine/arginine-rich SC35-like splicing factor SCL33 (SCL33) from Arabidopsis thaliana (Mouse-ear cress).